We begin with the raw amino-acid sequence, 247 residues long: NAD(P)H-quinone oxidoreductase subunit K (247 aa).

Cysteine 63, cysteine 64, cysteine 128, and cysteine 159 together coordinate [4Fe-4S] cluster. The interval 218–247 (TRQAPPKELTEAIGMEVPPALASQKQKEEA) is disordered.

Belongs to the complex I 20 kDa subunit family. NDH-1 can be composed of about 15 different subunits; different subcomplexes with different compositions have been identified which probably have different functions. Requires [4Fe-4S] cluster as cofactor.

The protein localises to the cellular thylakoid membrane. The catalysed reaction is a plastoquinone + NADH + (n+1) H(+)(in) = a plastoquinol + NAD(+) + n H(+)(out). It catalyses the reaction a plastoquinone + NADPH + (n+1) H(+)(in) = a plastoquinol + NADP(+) + n H(+)(out). Its function is as follows. NDH-1 shuttles electrons from an unknown electron donor, via FMN and iron-sulfur (Fe-S) centers, to quinones in the respiratory and/or the photosynthetic chain. The immediate electron acceptor for the enzyme in this species is believed to be plastoquinone. Couples the redox reaction to proton translocation, and thus conserves the redox energy in a proton gradient. Cyanobacterial NDH-1 also plays a role in inorganic carbon-concentration. This chain is NAD(P)H-quinone oxidoreductase subunit K, found in Crocosphaera subtropica (strain ATCC 51142 / BH68) (Cyanothece sp. (strain ATCC 51142)).